A 174-amino-acid polypeptide reads, in one-letter code: MNYFTLFDLPRKFNIDKKLLSQNFYKLQLKFHPDLFINDSESKKKIILEKSIQINKGYKTLKNFLNRAIYFLCLNGYEVKKETLLLKNNDFLIRYFSLYEQLDNLKENNFNKKELNNLEQIIQKKIIYCKKKIELEFEKTRYKKVIKIISELLFFEKIKDVLKKEYNIYLRQIN.

The region spanning 2-74 (NYFTLFDLPR…LNRAIYFLCL (73 aa)) is the J domain.

The protein belongs to the HscB family. Interacts with HscA and stimulates its ATPase activity. Interacts with IscU.

Functionally, co-chaperone involved in the maturation of iron-sulfur cluster-containing proteins. Seems to help targeting proteins to be folded toward HscA. The sequence is that of Co-chaperone protein HscB from Buchnera aphidicola subsp. Acyrthosiphon pisum (strain Tuc7).